Reading from the N-terminus, the 280-residue chain is MQQPFNYPYPQIYWVDSSASSPWAPPGTVLPCPTSVPRRPGQRRPPPPPPPPPLPPPPPSPLPPLPLPPLKKRGNHSTGLCLLVMFFMVLVALVGLGLGMFQLFHLQKELAELRESTSQKHTASSLEKQIGHPSPPPEKKEQRKVAHLTGKPNSRSMPLEWEDTYGIVLLSGVKYKKGGLVINETGLYFVYSKVYFRGQSCTNLPLSHKVYMRNSKYPQDLVMMEGKMMSYCTTGQMWAHSSYLGAVFNLTSADHLYVNVSELSLVNFEESQTFFGLYKL.

The Cytoplasmic segment spans residues 1 to 80; sequence MQQPFNYPYP…KKRGNHSTGL (80 aa). The tract at residues 20–70 is disordered; the sequence is SSPWAPPGTVLPCPTSVPRRPGQRRPPPPPPPPPLPPPPPSPLPPLPLPPL. Residues 43–69 are compositionally biased toward pro residues; sequence RRPPPPPPPPPLPPPPPSPLPPLPLPP. A helical; Signal-anchor for type II membrane protein transmembrane segment spans residues 81-101; the sequence is CLLVMFFMVLVALVGLGLGMF. The Extracellular portion of the chain corresponds to 102–280; that stretch reads QLFHLQKELA…SQTFFGLYKL (179 aa). The disordered stretch occupies residues 117 to 155; the sequence is TSQKHTASSLEKQIGHPSPPPEKKEQRKVAHLTGKPNSR. Positions 144–280 constitute a THD domain; that stretch reads KVAHLTGKPN…SQTFFGLYKL (137 aa). Asn-183 carries an N-linked (GlcNAc...) asparagine glycan. A disulfide bond links Cys-201 and Cys-232. N-linked (GlcNAc...) asparagine glycosylation is found at Asn-249 and Asn-259.

The protein belongs to the tumor necrosis factor family. In terms of assembly, homotrimer. Interacts with ARHGAP9, BAIAP2L1, BTK, CACNB3, CACNB4, CRK, DLG2, DNMBP, DOCK4, EPS8L3, FGR, FYB1, FYN, HCK, ITK, ITSN2, KALRN, LYN, MACC1, MIA, MPP4, MYO15A, NCF1, NCK1, NCK2, NCKIPSD, OSTF1, PIK3R1, PSTPIP1, RIMBP3C, SAMSN1, SH3GL3, SH3PXD2B, SH3PXD2A, SH3RF2, SKAP2, SNX33, SNX9, SORBS3, SPTA1, SRC, SRGAP1, SRGAP2, SRGAP3, TEC, TJP3 and YES1. The soluble form derives from the membrane form by proteolytic processing. The membrane-bound form undergoes two successive intramembrane proteolytic cleavages. The first one is processed by ADAM10 producing an N-terminal fragment, which lacks the receptor-binding extracellular domain. This ADAM10-processed FasL (FasL APL) remnant form is still membrane anchored and further processed by SPPL2A that liberates the FasL intracellular domain (FasL ICD). FasL shedding by ADAM10 is a prerequisite for subsequent intramembrane cleavage by SPPL2A in T-cells. In terms of processing, phosphorylated by FGR on tyrosine residues; this is required for ubiquitination and subsequent internalization. Post-translationally, N-glycosylated. Glycosylation enhances apoptotic activity. Monoubiquitinated.

It localises to the cell membrane. The protein resides in the cytoplasmic vesicle lumen. The protein localises to the lysosome lumen. Its subcellular location is the secreted. It is found in the nucleus. Its function is as follows. Cytokine that binds to TNFRSF6/FAS, a receptor that transduces the apoptotic signal into cells. Involved in cytotoxic T-cell-mediated apoptosis, natural killer cell-mediated apoptosis and in T-cell development. Initiates fratricidal/suicidal activation-induced cell death (AICD) in antigen-activated T-cells contributing to the termination of immune responses. TNFRSF6/FAS-mediated apoptosis has also a role in the induction of peripheral tolerance. Binds to TNFRSF6B/DcR3, a decoy receptor that blocks apoptosis. In terms of biological role, induces FAS-mediated activation of NF-kappa-B, initiating non-apoptotic signaling pathways. Can induce apoptosis but does not appear to be essential for this process. Functionally, cytoplasmic form induces gene transcription inhibition. The protein is Tumor necrosis factor ligand superfamily member 6 (FASLG) of Macaca fascicularis (Crab-eating macaque).